The sequence spans 225 residues: E3 ubiquitin-protein ligase ATL59 (225 aa).

A helical membrane pass occupies residues 22 to 42 (FTFIVCVPICVILIVLLVLYI). The RING-type; atypical zinc finger occupies 97–139 (CSVCLGDYQAEEKLQQMPSCGHTFHMECIDLWLTSHTTCPLCR).

It belongs to the RING-type zinc finger family. ATL subfamily.

It localises to the membrane. The enzyme catalyses S-ubiquitinyl-[E2 ubiquitin-conjugating enzyme]-L-cysteine + [acceptor protein]-L-lysine = [E2 ubiquitin-conjugating enzyme]-L-cysteine + N(6)-ubiquitinyl-[acceptor protein]-L-lysine.. Its pathway is protein modification; protein ubiquitination. E3 ubiquitin-protein ligase able to catalyze polyubiquitination with ubiquitin-conjugating enzyme E2 UBC8, UBC10, UBC11, and UBC34 in vitro. The chain is E3 ubiquitin-protein ligase ATL59 (ATL59) from Arabidopsis thaliana (Mouse-ear cress).